The following is a 511-amino-acid chain: MSTEETVDEVPCCGSHDEAQCTIQHDLAPQPLIVEEEVNNGEKKAKIAVVGCSHGEMDAIYETMALIEEKKGYKFDLLICCGDYQAVRNHGDLPHMSIPPKYRSLQTFYKYYSGEKKAPVLTLFIGGNHEASGFLCELPNGGWVAPNIFYMGFANCIQFAGLRIAGLSGIYSHGDVEFSHYERPAFAERDVKSAYHVRNVDMFRLRQLKAANNDKLSNPIDIMLSHDWPGGIPDFGDSAWLFKKKDLFEADHKSGKLGNPALMKLIYDCRPRYYLAAHLHIKFAALVPHKGSGSERPQPTRFLSLDKPIPGRQFMQALEINVASDAKMELSYDPEWLAILKNTDLLTTADKTKIVLPDRIGSVPCVYDRKDFRPTAEEMEEITKLGDLTIKTDTFKHTAPPLKEDTSEAKNVPPSAYYRNPQSAEFCQWLGIKDLNYLLVEKSSDYVGIPFYMMPDSGETEFKSNQDEVDFGEDDFIIDRGHGSEEPEAKKSRLEEEKKKKKKKIENLKTL.

Positions 52, 54, 83, and 128 each coordinate a divalent metal cation. The segment at 168 to 198 (SGIYSHGDVEFSHYERPAFAERDVKSAYHVR) is lariat recognition loop. Positions 226, 278, and 280 each coordinate a divalent metal cation. The tract at residues 473-511 (EDDFIIDRGHGSEEPEAKKSRLEEEKKKKKKKIENLKTL) is disordered. The segment covering 477-498 (IIDRGHGSEEPEAKKSRLEEEK) has biased composition (basic and acidic residues).

The protein belongs to the lariat debranching enzyme family. Fe(2+) serves as cofactor. Zn(2+) is required as a cofactor. It depends on Mn(2+) as a cofactor.

The protein resides in the nucleus. Its activity is regulated as follows. Active in presence of diverse metals including Fe(2+), Zn(2+), Mn(2+). Binds two metal cations in two adjacent alpha and beta metal-binding pockets. In terms of biological role, cleaves the 2'-5' phosphodiester linkage at the branch point of lariat intron pre-mRNAs after splicing and converts them into linear molecules that are subsequently degraded. It thereby facilitates ribonucleotide turnover. The chain is Lariat debranching enzyme (dbr-1) from Caenorhabditis briggsae.